The primary structure comprises 185 residues: MKMIVGLGNPGQKYAGSKHNMGFMVVDGLAKRLNLTIDKLEFDAATATTRLNGEKIFLVKPQTFMNASGRAVRELMMFYQIQLDEIFVVQDDMDLTLGKLRLRKRGSAGGHNGIKDIISATGSDEFCRLKIGIQHPQRQRVVDWVLTPFSKTDQPLIDDAIEKADDALEDWLNGMPFDQLMNKFN.

Tyr-14 contacts tRNA. The active-site Proton acceptor is His-19. Residues Phe-64, Asn-66, and Asn-112 each coordinate tRNA.

It belongs to the PTH family. As to quaternary structure, monomer.

The protein resides in the cytoplasm. The catalysed reaction is an N-acyl-L-alpha-aminoacyl-tRNA + H2O = an N-acyl-L-amino acid + a tRNA + H(+). Its function is as follows. Hydrolyzes ribosome-free peptidyl-tRNAs (with 1 or more amino acids incorporated), which drop off the ribosome during protein synthesis, or as a result of ribosome stalling. Functionally, catalyzes the release of premature peptidyl moieties from peptidyl-tRNA molecules trapped in stalled 50S ribosomal subunits, and thus maintains levels of free tRNAs and 50S ribosomes. This chain is Peptidyl-tRNA hydrolase, found in Lacticaseibacillus casei (strain BL23) (Lactobacillus casei).